Here is a 165-residue protein sequence, read N- to C-terminus: Small ribosomal subunit protein uS5 (165 aa).

Residues 13–76 enclose the S5 DRBM domain; that stretch reads LEEKVLVVNR…EAARKNLITI (64 aa).

The protein belongs to the universal ribosomal protein uS5 family. Part of the 30S ribosomal subunit. Contacts proteins S4 and S8.

Functionally, with S4 and S12 plays an important role in translational accuracy. Located at the back of the 30S subunit body where it stabilizes the conformation of the head with respect to the body. This is Small ribosomal subunit protein uS5 from Chlamydia felis (strain Fe/C-56) (Chlamydophila felis).